A 49-amino-acid polypeptide reads, in one-letter code: Large ribosomal subunit protein bL33A (49 aa).

Belongs to the bacterial ribosomal protein bL33 family.

The polypeptide is Large ribosomal subunit protein bL33A (Lactobacillus johnsonii (strain CNCM I-12250 / La1 / NCC 533)).